Reading from the N-terminus, the 629-residue chain is tRNA uridine 5-carboxymethylaminomethyl modification enzyme MnmG (629 aa).

FAD is bound at residue 13 to 18; sequence GGGHAG. An NAD(+)-binding site is contributed by 273 to 287; sequence GPRYCPSIEDKVMRF.

This sequence belongs to the MnmG family. In terms of assembly, homodimer. Heterotetramer of two MnmE and two MnmG subunits. FAD is required as a cofactor.

It localises to the cytoplasm. Its function is as follows. NAD-binding protein involved in the addition of a carboxymethylaminomethyl (cmnm) group at the wobble position (U34) of certain tRNAs, forming tRNA-cmnm(5)s(2)U34. This chain is tRNA uridine 5-carboxymethylaminomethyl modification enzyme MnmG, found in Photorhabdus laumondii subsp. laumondii (strain DSM 15139 / CIP 105565 / TT01) (Photorhabdus luminescens subsp. laumondii).